A 90-amino-acid polypeptide reads, in one-letter code: Probable acyl carrier protein (90 aa).

One can recognise a Carrier domain in the interval 9-90 (QVTVEELSAL…LVNGALKTGV (82 aa)). Ser-47 carries the post-translational modification O-(pantetheine 4'-phosphoryl)serine.

4'-phosphopantetheine is transferred from CoA to a specific serine of the apo-ACP-like protein.

In terms of biological role, involved in developmentally regulated synthesis of a compound biosynthetically related to polyketide antibiotics which is essential for spore color in Streptomyces coelicolor. The polypeptide is Probable acyl carrier protein (Streptomyces coelicolor (strain ATCC BAA-471 / A3(2) / M145)).